The primary structure comprises 382 residues: Mannitol-1-phosphate 5-dehydrogenase (382 aa).

3 to 14 contributes to the NAD(+) binding site; it reads VLHFGAGNIGRG.

Belongs to the mannitol dehydrogenase family.

The enzyme catalyses D-mannitol 1-phosphate + NAD(+) = beta-D-fructose 6-phosphate + NADH + H(+). The protein is Mannitol-1-phosphate 5-dehydrogenase of Sodalis glossinidius (strain morsitans).